A 118-amino-acid chain; its full sequence is ATP synthase subunit g, mitochondrial (118 aa).

The protein belongs to the ATPase g subunit family. As to quaternary structure, F-type ATPases have 2 components, CF(1) - the catalytic core - and CF(0) - the membrane proton channel.

It localises to the mitochondrion membrane. In terms of biological role, mitochondrial membrane ATP synthase (F(1)F(0) ATP synthase or Complex V) produces ATP from ADP in the presence of a proton gradient across the membrane which is generated by electron transport complexes of the respiratory chain. F-type ATPases consist of two structural domains, F(1) - containing the extramembraneous catalytic core, and F(0) - containing the membrane proton channel, linked together by a central stalk and a peripheral stalk. During catalysis, ATP synthesis in the catalytic domain of F(1) is coupled via a rotary mechanism of the central stalk subunits to proton translocation. Part of the complex F(0) domain. Minor subunit located with subunit a in the membrane. The protein is ATP synthase subunit g, mitochondrial (atp20) of Schizosaccharomyces pombe (strain 972 / ATCC 24843) (Fission yeast).